Reading from the N-terminus, the 186-residue chain is Ribosome-recycling factor (186 aa).

Positions 135–164 are disordered; that stretch reads DGMDDLKKAEKDGEIGQDESRAQSERVQKM.

This sequence belongs to the RRF family.

It is found in the cytoplasm. Responsible for the release of ribosomes from messenger RNA at the termination of protein biosynthesis. May increase the efficiency of translation by recycling ribosomes from one round of translation to another. This Rhizobium meliloti (strain 1021) (Ensifer meliloti) protein is Ribosome-recycling factor.